The chain runs to 216 residues: Eukaryotic translation initiation factor isoform 4E-2 (216 aa).

Positions 1-23 are disordered; the sequence is MAEVEAPATAVEAPAAAVATTTP. C113 and C152 form a disulfide bridge.

Belongs to the eukaryotic initiation factor 4E family. As to quaternary structure, EIF4F is a multi-subunit complex, the composition of which varies with external and internal environmental conditions. It is composed of at least EIF4A, EIF4E and EIF4G. EIF4E is also known to interact with other partners. In higher plants two isoforms of EIF4F have been identified, named isoform EIF4F and isoform EIF(iso)4F. Isoform EIF4F has subunits p220 and p26, whereas isoform EIF(iso)4F has subunits p82 and p28. According to the redox status, the Cys-113-Cys-152 disulfide bridge may have a role in regulating protein function by affecting its ability to bind capped mRNA.

Functionally, recognizes and binds the 7-methylguanosine-containing mRNA cap during an early step in the initiation of protein synthesis and facilitates ribosome binding by inducing the unwinding of the mRNAs secondary structures. The chain is Eukaryotic translation initiation factor isoform 4E-2 from Zea mays (Maize).